The following is a 262-amino-acid chain: Snake venom serine proteinase 9 (262 aa).

A signal peptide spans 1 to 18; the sequence is MVLIRVLANLLILQLSYA. A propeptide spanning residues 19-24 is cleaved from the precursor; it reads QKSSEL. Positions 25-253 constitute a Peptidase S1 domain; it reads VIGGDECNID…HLDWIQSIIA (229 aa). 5 disulfides stabilise this stretch: C31–C165, C52–C68, C144–C214, C176–C193, and C204–C229. H67 acts as the Charge relay system in catalysis. N-linked (GlcNAc...) asparagine glycosylation is present at N105. Residue D112 is the Charge relay system of the active site. S208 acts as the Charge relay system in catalysis.

Belongs to the peptidase S1 family. Snake venom subfamily. Monomer. Expressed by the venom gland.

Its subcellular location is the secreted. Its function is as follows. Snake venom serine protease that may act in the hemostasis system of the prey. In Crotalus adamanteus (Eastern diamondback rattlesnake), this protein is Snake venom serine proteinase 9.